A 304-amino-acid chain; its full sequence is C-type lectin domain-containing protein 141 (304 aa).

A signal peptide spans 1 to 19 (MRSSSTLLIAFGLFLASMS). The disordered stretch occupies residues 29–100 (GSGGHRPPSS…TTPEPTTTKV (72 aa)). Over residues 51–99 (TKPPKSTSTPSTSTSTPTTTTTTTTTTTTTPTTTTTTTTTTTPEPTTTK) the composition is skewed to low complexity.

The chain is C-type lectin domain-containing protein 141 (clec-141) from Caenorhabditis elegans.